Reading from the N-terminus, the 793-residue chain is MPLASNPVAFLPSSTAHGDLPAAAFSRSSAGCLQLCRPLTPTSSLQCNAISRPRTEEYIDVIQNGLPVIKWHEIVEDDAEKDSPKDKVGELRDAVRSMLRSMGDGEISISPYDTAWVALVADADGDRPQFPSSLHWISTNQLADGSWGDHATFSIFDRIINTLACVVALTSWDLHPDKTHKGILFIKKNIHRLEEENVEHMPIGFEVALPSLIDIAKQLQIDIPSDTRGLREIYARREIKLKKIPSDILHQMPTTLLHSLEGMPGLMWQKLLKLQSEDGSFLFSPSSTAFALQQTKDHNCLKYLTNHLIKFKGGVPNVYPVDLFEHLWAVDRLQRLGVSRYFQPEIEECVAYVYRYWTEKGICWARNSEIQDIDDTAMGFRLLRLHGYEVSADVFKHFESGGEFFCFKGQSTQAVTGMYNLYRAAQLIFPGENILEDAATFSAKFLQQKRANNELLDKWIITKDLPGEVGYALDVPWYASLPRVETRFYLEQYGGEDDVWIGKTLYRMPYVNNNKYLELAKLDYNNCQALHQQEWKDIQKWYRNSSLGEFGLSEGSLVQAYYVAAASIFEPQKSQERLAWAKTAILMQTITSHFHHSAEQKRVFLHEFQHATGGRYKTTRTLVGTLLRTLNQLSLDILLAHGCHIHQPLKNAWHKWIKTWEGGGGGAELLVQTLNLCGGGRRNRWESEELLSSHPKYEHLLKATVGVCDKLRRFQHRKDCNGCMGSDGGIRMLDIEAGMQELVKLVVTKSPGDLDSEIKQNFFMIARSYYYAAYCNPGTINFHIAKVLFERVQ.

A chloroplast-targeting transit peptide spans 1–47 (MPLASNPVAFLPSSTAHGDLPAAAFSRSSAGCLQLCRPLTPTSSLQC). Residues Asp372 and Asp374 each coordinate Mg(2+). Positions 372–375 (DIDD) match the DXDD motif motif.

It belongs to the terpene synthase family. Mg(2+) serves as cofactor.

It localises to the plastid. Its subcellular location is the chloroplast. The catalysed reaction is (2E,6E,10E)-geranylgeranyl diphosphate = ent-copalyl diphosphate. It participates in plant hormone biosynthesis; gibberellin biosynthesis. Functionally, catalyzes the conversion of geranylgeranyl diphosphate (GGPP) to the gibberellin precursor ent-copalyl diphosphate (CPP). This chain is Ent-copalyl diphosphate synthase, chloroplastic, found in Salvia miltiorrhiza (Chinese sage).